We begin with the raw amino-acid sequence, 295 residues long: MNFFQAIFLGLVQALTEYLPVSSSAHVRIVGDLMLGGDPGAAFTAIIQIGTELAVLLYFRRDIWNILKSWCLCLAGKEGKDRASRFGAHNKDARLGWYIIIATIPILIAGVLFQHAIETTLRNLWITVAMLFIFGVILWIVDDRARQVKTLDDMNTKDAIWFGIGQMLALIPGVSRSGGTITFGRAMGYKREAAVRAAFLMAIPAVFGAGILEAVKAIKDVNADAMFPGWGATIAATVVAFVVGYIVIIGFLKFVSTYSYKAFAIYRIALAIIVAILLLCGVLSPLEGIPVSGNA.

The next 6 membrane-spanning stretches (helical) occupy residues 39–59 (PGAA…LLYF), 97–117 (WYII…QHAI), 121–141 (LRNL…LWIV), 198–218 (AFLM…VKAI), 232–252 (ATIA…IGFL), and 263–283 (FAIY…CGVL).

Belongs to the UppP family.

The protein resides in the cell membrane. It carries out the reaction di-trans,octa-cis-undecaprenyl diphosphate + H2O = di-trans,octa-cis-undecaprenyl phosphate + phosphate + H(+). In terms of biological role, catalyzes the dephosphorylation of undecaprenyl diphosphate (UPP). Confers resistance to bacitracin. The chain is Undecaprenyl-diphosphatase from Bifidobacterium animalis subsp. lactis (strain AD011).